A 189-amino-acid polypeptide reads, in one-letter code: Thioredoxin-like protein CITRX, chloroplastic (189 aa).

The N-terminal 56 residues, 1 to 56, are a transit peptide targeting the chloroplast; sequence MAMAAAASLLPASAAPTLPGRAFRPPRNSTPTASLSCDGGSRCRGVGLGVILGGCR. Residues 72–189 form the Thioredoxin domain; it reads GSGKYIAPDY…MIRNIIDNEL (118 aa). Active-site nucleophile residues include Cys112 and Cys115. Cys112 and Cys115 are oxidised to a cystine.

This sequence belongs to the thioredoxin family. Plant CITRX-type subfamily.

The protein localises to the plastid. The protein resides in the chloroplast. Probable thiol-disulfide oxidoreductase that may play a role in proper chloroplast development. The protein is Thioredoxin-like protein CITRX, chloroplastic of Oryza sativa subsp. japonica (Rice).